The primary structure comprises 725 residues: Ribosomal RNA large subunit methyltransferase K/L (725 aa).

A THUMP domain is found at 46–157 (VAYRLCLWSR…RGQATLSLDL (112 aa)). Residues 393 to 412 (TGERGERNDDGQARAPSEPA) are disordered. A compositionally biased stretch (basic and acidic residues) spans 395-404 (ERGERNDDGQ).

It belongs to the methyltransferase superfamily. RlmKL family.

It is found in the cytoplasm. The enzyme catalyses guanosine(2445) in 23S rRNA + S-adenosyl-L-methionine = N(2)-methylguanosine(2445) in 23S rRNA + S-adenosyl-L-homocysteine + H(+). It catalyses the reaction guanosine(2069) in 23S rRNA + S-adenosyl-L-methionine = N(2)-methylguanosine(2069) in 23S rRNA + S-adenosyl-L-homocysteine + H(+). Its function is as follows. Specifically methylates the guanine in position 2445 (m2G2445) and the guanine in position 2069 (m7G2069) of 23S rRNA. The chain is Ribosomal RNA large subunit methyltransferase K/L from Pseudomonas paraeruginosa (strain DSM 24068 / PA7) (Pseudomonas aeruginosa (strain PA7)).